We begin with the raw amino-acid sequence, 195 residues long: Ubiquitin-conjugating enzyme E2 T (195 aa).

The UBC core domain occupies 2 to 152 (QRTSRLKREL…ARQWTEKHAR (151 aa)). C86 functions as the Glycyl thioester intermediate in the catalytic mechanism. Residue K91 forms a Glycyl lysine isopeptide (Lys-Gly) (interchain with G-Cter in ubiquitin) linkage. The segment covering 146–157 (WTEKHARQKTDE) has biased composition (basic and acidic residues). A disordered region spans residues 146–195 (WTEKHARQKTDEEGMPGSLPEVGGSEGPSAAQKRKAGQLSSGGKRFCPDV). K180 participates in a covalent cross-link: Glycyl lysine isopeptide (Lys-Gly) (interchain with G-Cter in ubiquitin). K189 is covalently cross-linked (Glycyl lysine isopeptide (Lys-Gly) (interchain with G-Cter in SUMO2)).

This sequence belongs to the ubiquitin-conjugating enzyme family. In terms of assembly, interacts with FANCL and BRCA1. Auto-ubiquitinated. Effects of auto-monoubiquitination at Lys-91 and Lys-180 are unclear.

The protein localises to the nucleus. The enzyme catalyses S-ubiquitinyl-[E1 ubiquitin-activating enzyme]-L-cysteine + [E2 ubiquitin-conjugating enzyme]-L-cysteine = [E1 ubiquitin-activating enzyme]-L-cysteine + S-ubiquitinyl-[E2 ubiquitin-conjugating enzyme]-L-cysteine.. It functions in the pathway protein modification; protein ubiquitination. Its function is as follows. Accepts ubiquitin from the E1 complex and catalyzes its covalent attachment to other proteins. Catalyzes monoubiquitination. Involved in mitomycin-C (MMC)-induced DNA repair: acts as a specific E2 ubiquitin-conjugating enzyme for the Fanconi anemia complex by associating with E3 ubiquitin-protein ligase FANCL and catalyzing monoubiquitination of FANCD2, a key step in the DNA damage pathway. Also mediates monoubiquitination of FANCL and FANCI. May contribute to ubiquitination and degradation of BRCA1. In vitro able to promote polyubiquitination using all 7 ubiquitin Lys residues, but may prefer 'Lys-11'-, 'Lys-27'-, 'Lys-48'- and 'Lys-63'-linked polyubiquitination. The polypeptide is Ubiquitin-conjugating enzyme E2 T (UBE2T) (Bos taurus (Bovine)).